The sequence spans 595 residues: Cyclin-dependent kinase-like 3 (595 aa).

The Protein kinase domain maps to 4-286; that stretch reads YETLGKVGEG…STDLLRHDYF (283 aa). Residues 10 to 18 and Lys33 each bind ATP; that span reads VGEGSYGTV. The short motif at 45–51 is the [NKR]KIAxRE element; the sequence is KIATREI. Asp125 serves as the catalytic Proton acceptor. Thr158 bears the Phosphothreonine mark. Phosphotyrosine is present on Tyr160. Disordered stretches follow at residues 362-427, 448-513, and 551-586; these read VIKA…PHAG, SSNL…NKRK, and RESKKTDSSKIPTLLSMDPNQEKQEGGDGDCEGKNL. The segment covering 368–386 has biased composition (basic and acidic residues); it reads GKGDVPDQKKPEYEGDHRQ. The span at 387 to 397 shows a compositional bias: polar residues; sequence QGTADDTQPSS. Residues 448-457 show a composition bias toward low complexity; it reads SSNLSHPNSR. Polar residues-rich tracts occupy residues 468–491 and 499–509; these read SSQTIGQTLSNSRQEDTGPTQVQT and RTGQNDQISSG. Residues 570–585 are compositionally biased toward basic and acidic residues; sequence NQEKQEGGDGDCEGKN.

This sequence belongs to the protein kinase superfamily. CMGC Ser/Thr protein kinase family. CDC2/CDKX subfamily.

Its subcellular location is the cytoplasm. The catalysed reaction is L-seryl-[protein] + ATP = O-phospho-L-seryl-[protein] + ADP + H(+). The enzyme catalyses L-threonyl-[protein] + ATP = O-phospho-L-threonyl-[protein] + ADP + H(+). This is Cyclin-dependent kinase-like 3 from Mus musculus (Mouse).